The sequence spans 186 residues: Dynactin subunit 3 (186 aa).

Position 2 is an N-acetylalanine (alanine 2).

It belongs to the dynactin subunit 3 family. Subunit of dynactin, a multiprotein complex part of a tripartite complex with dynein and a adapter, such as BICDL1, BICD2 or HOOK3. The dynactin complex is built around ACTR1A/ACTB filament and consists of an actin-related filament composed of a shoulder domain, a pointed end and a barbed end. Its length is defined by its flexible shoulder domain. The soulder is composed of 2 DCTN1 subunits, 4 DCTN2 and 2 DCTN3. The 4 DCNT2 (via N-terminus) bind the ACTR1A filament and act as molecular rulers to determine the length. The pointed end is important for binding dynein-dynactin cargo adapters. Consists of 4 subunits: ACTR10, DCNT4, DCTN5 and DCTN6. The barbed end is composed of a CAPZA1:CAPZB heterodimers, which binds ACTR1A/ACTB filament and dynactin and stabilizes dynactin.

Its subcellular location is the cytoplasm. It is found in the cytoskeleton. The protein resides in the microtubule organizing center. The protein localises to the centrosome. It localises to the chromosome. Its subcellular location is the centromere. It is found in the kinetochore. The protein resides in the spindle. The protein localises to the cleavage furrow. It localises to the midbody. Its function is as follows. Part of the dynactin complex that activates the molecular motor dynein for ultra-processive transport along microtubules. Together with dynein is involved in spindle assembly and cytokinesis. The polypeptide is Dynactin subunit 3 (Sus scrofa (Pig)).